The following is a 127-amino-acid chain: Small ribosomal subunit protein uS11 (127 aa).

The protein belongs to the universal ribosomal protein uS11 family. As to quaternary structure, part of the 30S ribosomal subunit. Interacts with proteins S7 and S18. Binds to IF-3.

Functionally, located on the platform of the 30S subunit, it bridges several disparate RNA helices of the 16S rRNA. Forms part of the Shine-Dalgarno cleft in the 70S ribosome. The protein is Small ribosomal subunit protein uS11 of Ehrlichia ruminantium (strain Gardel).